The sequence spans 382 residues: Small ribosomal subunit protein bS1 homolog (382 aa).

4 S1 motif domains span residues 18–85, 103–168, 189–257, and 274–343; these read GDVV…LSKR, GHVF…LSHK, GDVV…LSIK, and GDIR…LSIK. S244 bears the Phosphoserine mark.

It belongs to the bacterial ribosomal protein bS1 family.

In Bacillus cereus (strain ATCC 10987 / NRS 248), this protein is Small ribosomal subunit protein bS1 homolog.